The following is a 430-amino-acid chain: Protein AST2 (430 aa).

Lipid raft-associated protein involved in the targeting of PMA1 from Golgi to the plasma membrane. May induce clustering of PMA1, which facilitates partition of PMA1 into lipid rafts after leaving the ER its and transport to the cell surface. This Saccharomyces cerevisiae (strain ATCC 204508 / S288c) (Baker's yeast) protein is Protein AST2.